A 1045-amino-acid chain; its full sequence is Bifunctional glutamine synthetase adenylyltransferase/adenylyl-removing enzyme (1045 aa).

Residues 1–527 (MSGPLRSERK…LHSQLFYRPL (527 aa)) form an adenylyl removase region. Residues 533–1045 (NLSADAIRLS…GVDSMEQREF (513 aa)) are adenylyl transferase.

It belongs to the GlnE family. The cofactor is Mg(2+).

The catalysed reaction is [glutamine synthetase]-O(4)-(5'-adenylyl)-L-tyrosine + phosphate = [glutamine synthetase]-L-tyrosine + ADP. It carries out the reaction [glutamine synthetase]-L-tyrosine + ATP = [glutamine synthetase]-O(4)-(5'-adenylyl)-L-tyrosine + diphosphate. Its function is as follows. Involved in the regulation of glutamine synthetase GlnA, a key enzyme in the process to assimilate ammonia. When cellular nitrogen levels are high, the C-terminal adenylyl transferase (AT) inactivates GlnA by covalent transfer of an adenylyl group from ATP to specific tyrosine residue of GlnA, thus reducing its activity. Conversely, when nitrogen levels are low, the N-terminal adenylyl removase (AR) activates GlnA by removing the adenylyl group by phosphorolysis, increasing its activity. The regulatory region of GlnE binds the signal transduction protein PII (GlnB) which indicates the nitrogen status of the cell. In Corynebacterium glutamicum (strain ATCC 13032 / DSM 20300 / JCM 1318 / BCRC 11384 / CCUG 27702 / LMG 3730 / NBRC 12168 / NCIMB 10025 / NRRL B-2784 / 534), this protein is Bifunctional glutamine synthetase adenylyltransferase/adenylyl-removing enzyme.